A 520-amino-acid polypeptide reads, in one-letter code: Glutamate decarboxylase-like protein FG08083 (520 aa).

Residue 86 to 88 (KLV) coordinates substrate. An N6-(pyridoxal phosphate)lysine modification is found at lysine 300. A disordered region spans residues 338–357 (KNGVSSEQSANTNGSEKESW). Residues 340–351 (GVSSEQSANTNG) show a composition bias toward polar residues. Arginine 492 provides a ligand contact to substrate.

This sequence belongs to the group II decarboxylase family. Pyridoxal 5'-phosphate serves as cofactor.

It functions in the pathway mycotoxin biosynthesis. Its function is as follows. Glutamate decarboxylase-like protein; part of the gene cluster that mediates the biosynthesis of butenolide, a mycotoxin that shows antibiotic activity but does not seem to play a major role in the spread of head blight in wheat. Butenolide is derived from glutamic acid via a 4-acetamido-2-butenoic acid intermediate. The predicted function of the NADH:flavin oxidoreductase FG08077, the cytochrome P450 monooxygenase FG08079, the decarboxylase FG08083, and the putative acetyltransferase FG08082 are consistent with this pathway, however, the respective activities of the butelonide biosynthesis cluster enzymes have still to be experimentally determined. The protein is Glutamate decarboxylase-like protein FG08083 of Gibberella zeae (strain ATCC MYA-4620 / CBS 123657 / FGSC 9075 / NRRL 31084 / PH-1) (Wheat head blight fungus).